The chain runs to 338 residues: Microtubule-associated protein RP/EB family member 2 (338 aa).

A disordered region spans residues 1-21 (MPGPTQALSPNGENNNDIIQD). Residues 57–159 (TMSRHDIIAW…FIQWFKKFFD (103 aa)) enclose the Calponin-homology (CH) domain. Disordered stretches follow at residues 171-241 (EARQ…KDLE) and 300-338 (SEEH…FHFV). Low complexity predominate over residues 200–234 (SPTAGAAKSSPASKPGSTPSRPSSAKKAAPSSSAS). The EB1 C-terminal domain occupies 236 to 306 (SDKDLETQVI…LYASEEHESH (71 aa)). A compositionally biased stretch (basic and acidic residues) spans 300 to 327 (SEEHESHTEEHEGEEQVHEQPSSRRSTD). Low complexity predominate over residues 328–338 (SRSVSDNFHFV).

This sequence belongs to the MAPRE family.

It localises to the cytoplasm. The protein localises to the cytoskeleton. Its function is as follows. May be involved in microtubule polymerization, and spindle function by stabilizing microtubules and anchoring them at centrosomes. This Gallus gallus (Chicken) protein is Microtubule-associated protein RP/EB family member 2 (MAPRE2).